The following is a 1483-amino-acid chain: Neuropathy target esterase sws (1483 aa).

The Lumenal portion of the chain corresponds to 1–34 (MDVLELLRASANGCYNTLFSDAWFQYVSKQIATT). Residues 35–55 (MYWYGALLVIGVLFIAWFLYF) form a helical membrane-spanning segment. Residues 56-1483 (KRLARLRLRD…ENLTKTDTKN (1428 aa)) are Cytoplasmic-facing. A nucleoside 3',5'-cyclic phosphate is bound at residue 174 to 301 (IFGHFEKPIF…IRVIQVIMIR (128 aa)). Disordered regions lie at residues 348–380 (ASRP…PNAN) and 404–440 (SSAV…GTSI). Residues 413-440 (GTRRSSTTYGPSGESPNGNANTAPGTSI) show a composition bias toward polar residues. Residues Ser418 and Ser424 each carry the phosphoserine modification. A nucleoside 3',5'-cyclic phosphate is bound by residues 456–585 (ELGL…VVRR) and 574–701 (IVLD…LSHR). The PNPLA domain maps to 927–1093 (LVLGGGGARG…VNNLPGHLWR (167 aa)). A GXGXXG motif is present at residues 931–936 (GGGARG). The GXSXG signature appears at 958–962 (GVSIG). The Nucleophile role is filled by Ser960. Catalysis depends on Asp1080, which acts as the Proton acceptor. The DGA/G motif lies at 1080–1082 (DGG). A Phosphoserine modification is found at Ser1174. A disordered region spans residues 1349 to 1483 (DKATQSTPPT…ENLTKTDTKN (135 aa)). Polar residues predominate over residues 1351-1373 (ATQSTPPTPNKQHALSPTSSQTN). Basic and acidic residues predominate over residues 1382–1396 (KPKEKQPSYDKLDRE). Positions 1410–1419 (ERSSMQQRDS) are enriched in low complexity. A compositionally biased stretch (basic and acidic residues) spans 1445 to 1458 (LNKPEQQPEQKPVP). Over residues 1465–1474 (QKQQDQQQQE) the composition is skewed to low complexity.

It belongs to the NTE family. In terms of assembly, interacts with Pka-C3; interaction inhibits the catalytic function of Pka-C3 and the esterase activity of sws.

Its subcellular location is the endoplasmic reticulum membrane. The enzyme catalyses a 1-acyl-sn-glycero-3-phosphocholine + H2O = sn-glycerol 3-phosphocholine + a fatty acid + H(+). In terms of biological role, phospholipase B that deacylates intracellular phosphatidylcholine (PtdCho), generating glycerophosphocholine (GroPtdCho). This deacylation occurs at both sn-2 and sn-1 positions of PtdCho. Its specific chemical modification by certain organophosphorus (OP) compounds leads to distal axonopathy. Plays a role in the signaling mechanism between neurons and glia that regulates glia wrapping during development of the adult brain. Essential for membrane lipid homeostasis and cell survival in both neurons and glia of the adult brain. The polypeptide is Neuropathy target esterase sws (Drosophila virilis (Fruit fly)).